Here is a 109-residue protein sequence, read N- to C-terminus: Spermidine export protein MdtI (109 aa).

Transmembrane regions (helical) follow at residues 6-26 (FYHIAFLILAVILEIIANILL), 35-55 (VWLGILSLLSVLGAFSALAQA), 64-84 (AYALWGGFGIAATVAAGWILF), and 88-108 (LNYKGWIGLILLLAGMVMIKL).

This sequence belongs to the drug/metabolite transporter (DMT) superfamily. Small multidrug resistance (SMR) (TC 2.A.7.1) family. MdtI subfamily. In terms of assembly, forms a complex with MdtJ.

The protein resides in the cell inner membrane. Catalyzes the excretion of spermidine. This chain is Spermidine export protein MdtI, found in Yersinia enterocolitica serotype O:8 / biotype 1B (strain NCTC 13174 / 8081).